The primary structure comprises 767 residues: Syn-copalyl diphosphate synthase (767 aa).

The tract at residues 45–74 (GPMLISKSPPYPASEETREWEAEGQHEHTD) is disordered. The segment covering 59–74 (EETREWEAEGQHEHTD) has biased composition (basic and acidic residues). Lys233 contributes to the substrate binding site. Mg(2+)-binding residues include Asp365 and Asp367. The DXDD motif signature appears at 365-368 (DIDD). Lys453 contributes to the substrate binding site.

Mg(2+) is required as a cofactor.

The enzyme catalyses (2E,6E,10E)-geranylgeranyl diphosphate = 9alpha-copalyl diphosphate. Catalyzes the conversion of geranylgeranyl diphosphate to the phytoalexin precursor syn-copalyl diphosphate. The polypeptide is Syn-copalyl diphosphate synthase (CPS4) (Oryza sativa subsp. indica (Rice)).